A 254-amino-acid chain; its full sequence is Triosephosphate isomerase (254 aa).

9-11 (NWK) provides a ligand contact to substrate. The Electrophile role is filled by H95. The Proton acceptor role is filled by E167. Substrate contacts are provided by residues G173, S213, and 234–235 (GG).

This sequence belongs to the triosephosphate isomerase family. Homodimer.

The protein resides in the cytoplasm. It carries out the reaction D-glyceraldehyde 3-phosphate = dihydroxyacetone phosphate. It participates in carbohydrate biosynthesis; gluconeogenesis. Its pathway is carbohydrate degradation; glycolysis; D-glyceraldehyde 3-phosphate from glycerone phosphate: step 1/1. Involved in the gluconeogenesis. Catalyzes stereospecifically the conversion of dihydroxyacetone phosphate (DHAP) to D-glyceraldehyde-3-phosphate (G3P). This chain is Triosephosphate isomerase, found in Roseiflexus sp. (strain RS-1).